Reading from the N-terminus, the 487-residue chain is V-type proton ATPase subunit B2 (487 aa).

An N-acetylglycine modification is found at Gly2.

Belongs to the ATPase alpha/beta chains family. In terms of assembly, V-ATPase is a heteromultimeric enzyme composed of a peripheral catalytic V1 complex (components A to H) attached to an integral membrane V0 proton pore complex (components: a, c, c'', d and e).

It is found in the vacuole membrane. Its function is as follows. Non-catalytic subunit of the peripheral V1 complex of vacuolar ATPase. V-ATPase is responsible for acidifying a variety of intracellular compartments in eukaryotic cells. In Arabidopsis thaliana (Mouse-ear cress), this protein is V-type proton ATPase subunit B2 (VHA-B2).